A 308-amino-acid polypeptide reads, in one-letter code: UDP-N-acetylenolpyruvoylglucosamine reductase (308 aa).

Residues 30–213 (RVGGAAEWFI…KATTQSHLDH (184 aa)) enclose the FAD-binding PCMH-type domain. Residue R176 is part of the active site. S227 serves as the catalytic Proton donor. E297 is an active-site residue.

Belongs to the MurB family. The cofactor is FAD.

It is found in the cytoplasm. It catalyses the reaction UDP-N-acetyl-alpha-D-muramate + NADP(+) = UDP-N-acetyl-3-O-(1-carboxyvinyl)-alpha-D-glucosamine + NADPH + H(+). The protein operates within cell wall biogenesis; peptidoglycan biosynthesis. In terms of biological role, cell wall formation. The polypeptide is UDP-N-acetylenolpyruvoylglucosamine reductase (Acaryochloris marina (strain MBIC 11017)).